We begin with the raw amino-acid sequence, 201 residues long: Peptide deformylase (201 aa).

2 residues coordinate Fe cation: Cys-121 and His-163. Residue Glu-164 is part of the active site. Fe cation is bound at residue His-167.

Belongs to the polypeptide deformylase family. It depends on Fe(2+) as a cofactor.

It carries out the reaction N-terminal N-formyl-L-methionyl-[peptide] + H2O = N-terminal L-methionyl-[peptide] + formate. Removes the formyl group from the N-terminal Met of newly synthesized proteins. Requires at least a dipeptide for an efficient rate of reaction. N-terminal L-methionine is a prerequisite for activity but the enzyme has broad specificity at other positions. This Parasynechococcus marenigrum (strain WH8102) protein is Peptide deformylase.